A 351-amino-acid polypeptide reads, in one-letter code: Anthranilate phosphoribosyltransferase (351 aa).

Residues Gly80, 83–84, Thr88, 90–93, 108–116, and Ser120 each bind 5-phospho-alpha-D-ribose 1-diphosphate; these read GD, NIST, and KHGNRSVTS. Anthranilate is bound at residue Gly80. Residue Ser92 participates in Mg(2+) binding. Asn111 serves as a coordination point for anthranilate. Residue Arg166 coordinates anthranilate. Mg(2+) contacts are provided by Asp229 and Glu230.

Belongs to the anthranilate phosphoribosyltransferase family. As to quaternary structure, homodimer. It depends on Mg(2+) as a cofactor.

It carries out the reaction N-(5-phospho-beta-D-ribosyl)anthranilate + diphosphate = 5-phospho-alpha-D-ribose 1-diphosphate + anthranilate. The protein operates within amino-acid biosynthesis; L-tryptophan biosynthesis; L-tryptophan from chorismate: step 2/5. Its function is as follows. Catalyzes the transfer of the phosphoribosyl group of 5-phosphorylribose-1-pyrophosphate (PRPP) to anthranilate to yield N-(5'-phosphoribosyl)-anthranilate (PRA). In Pelodictyon phaeoclathratiforme (strain DSM 5477 / BU-1), this protein is Anthranilate phosphoribosyltransferase.